We begin with the raw amino-acid sequence, 1024 residues long: Error-prone DNA polymerase (1024 aa).

The protein belongs to the DNA polymerase type-C family. DnaE2 subfamily.

It localises to the cytoplasm. The enzyme catalyses DNA(n) + a 2'-deoxyribonucleoside 5'-triphosphate = DNA(n+1) + diphosphate. In terms of biological role, DNA polymerase involved in damage-induced mutagenesis and translesion synthesis (TLS). It is not the major replicative DNA polymerase. This is Error-prone DNA polymerase from Pseudomonas paraeruginosa (strain DSM 24068 / PA7) (Pseudomonas aeruginosa (strain PA7)).